The sequence spans 147 residues: 3-dehydroquinate dehydratase (147 aa).

The Proton acceptor role is filled by Tyr23. 3 residues coordinate substrate: Asn74, His80, and Asp87. His100 (proton donor) is an active-site residue. Substrate is bound by residues 101–102 (LS) and Arg111.

This sequence belongs to the type-II 3-dehydroquinase family. As to quaternary structure, homododecamer.

The catalysed reaction is 3-dehydroquinate = 3-dehydroshikimate + H2O. Its pathway is metabolic intermediate biosynthesis; chorismate biosynthesis; chorismate from D-erythrose 4-phosphate and phosphoenolpyruvate: step 3/7. Catalyzes a trans-dehydration via an enolate intermediate. The protein is 3-dehydroquinate dehydratase of Clostridium botulinum (strain ATCC 19397 / Type A).